We begin with the raw amino-acid sequence, 234 residues long: N-(5'-phosphoribosyl)anthranilate isomerase 1 (234 aa).

This sequence belongs to the TrpF family.

It catalyses the reaction N-(5-phospho-beta-D-ribosyl)anthranilate = 1-(2-carboxyphenylamino)-1-deoxy-D-ribulose 5-phosphate. It functions in the pathway amino-acid biosynthesis; L-tryptophan biosynthesis; L-tryptophan from chorismate: step 3/5. This chain is N-(5'-phosphoribosyl)anthranilate isomerase 1 (trpF1), found in Methanosarcina mazei (strain ATCC BAA-159 / DSM 3647 / Goe1 / Go1 / JCM 11833 / OCM 88) (Methanosarcina frisia).